A 317-amino-acid polypeptide reads, in one-letter code: Melanoma-associated antigen 4 (317 aa).

Basic and acidic residues predominate over residues 1–14 (MSSEQKSQHCKPEE). A disordered region spans residues 1–102 (MSSEQKSQHC…EEGPSTSPDA (102 aa)). The span at 66–82 (PQGASALPTTISFTCWR) shows a compositional bias: polar residues. The MAGE domain maps to 110–309 (LSNKVDELAH…IAYPSLREAA (200 aa)).

In terms of tissue distribution, expressed in many tumors of several types, such as melanoma, head and neck squamous cell carcinoma, lung carcinoma and breast carcinoma, but not in normal tissues except for testes and placenta.

Functionally, regulates cell proliferation through the inhibition of cell cycle arrest at the G1 phase. Also negatively regulates p53-mediated apoptosis. This Homo sapiens (Human) protein is Melanoma-associated antigen 4 (MAGEA4).